A 119-amino-acid chain; its full sequence is UPF0212 protein Mlab_0931 (119 aa).

Belongs to the UPF0212 family.

This Methanocorpusculum labreanum (strain ATCC 43576 / DSM 4855 / Z) protein is UPF0212 protein Mlab_0931.